The chain runs to 192 residues: dTTP/UTP pyrophosphatase (192 aa).

Residue Asp-70 is the Proton acceptor of the active site.

The protein belongs to the Maf family. YhdE subfamily. A divalent metal cation is required as a cofactor.

The protein resides in the cytoplasm. It carries out the reaction dTTP + H2O = dTMP + diphosphate + H(+). The catalysed reaction is UTP + H2O = UMP + diphosphate + H(+). Nucleoside triphosphate pyrophosphatase that hydrolyzes dTTP and UTP. May have a dual role in cell division arrest and in preventing the incorporation of modified nucleotides into cellular nucleic acids. In Clostridium perfringens (strain ATCC 13124 / DSM 756 / JCM 1290 / NCIMB 6125 / NCTC 8237 / Type A), this protein is dTTP/UTP pyrophosphatase.